Here is a 271-residue protein sequence, read N- to C-terminus: Energy-coupling factor transporter ATP-binding protein EcfA (271 aa).

The region spanning 2–231 (ISIQNLTFYY…PLFLQQYKLT (230 aa)) is the ABC transporter domain. Residue 34–41 (GHNGSGKS) participates in ATP binding.

The protein belongs to the ABC transporter superfamily. Energy-coupling factor EcfA family. Forms a stable energy-coupling factor (ECF) transporter complex composed of 2 membrane-embedded substrate-binding proteins (S component), 2 ATP-binding proteins (A component) and 2 transmembrane proteins (T component).

The protein localises to the cell membrane. Functionally, ATP-binding (A) component of a common energy-coupling factor (ECF) ABC-transporter complex. Unlike classic ABC transporters this ECF transporter provides the energy necessary to transport a number of different substrates. The sequence is that of Energy-coupling factor transporter ATP-binding protein EcfA from Aster yellows witches'-broom phytoplasma (strain AYWB).